The sequence spans 258 residues: Casein kinase II subunit beta' (258 aa).

Positions 1-10 (MGSRSENVGT) are enriched in polar residues. Residues 1–29 (MGSRSENVGTVTREGSRVEQDDVLMDDDS) are disordered.

It belongs to the casein kinase 2 subunit beta family. In terms of assembly, tetramer composed of an alpha subunit, an alpha' subunit, one beta subunit and one beta' subunit. Interacts with FACT subunits POB3 and SPT16. Interaction with YTA7. In terms of processing, phosphorylated by alpha subunit. The N-terminus is blocked.

Functionally, regulatory subunit of casein kinase II/CK2. As part of the kinase complex regulates the basal catalytic activity of the alpha subunit a constitutively active serine/threonine-protein kinase that phosphorylates a large number of substrates containing acidic residues C-terminal to the phosphorylated serine or threonine. This chain is Casein kinase II subunit beta', found in Saccharomyces cerevisiae (strain ATCC 204508 / S288c) (Baker's yeast).